The following is a 210-amino-acid chain: uncharacterized protein (210 aa).

A signal peptide spans 1 to 20 (MRVITLSGITLFLLASLASA). Topologically, residues 21–175 (IELTFKLENQ…YSTVKSTQAR (155 aa)) are lumenal. The 84-residue stretch at 32–115 (KQCYYLDSFH…DKIVTMEITM (84 aa)) folds into the GOLD domain. N-linked (GlcNAc...) asparagine glycosylation occurs at Asn165. Residues 176 to 196 (IFWFSLAESIMVVALSALQVF) form a helical membrane-spanning segment. Residues 197–210 (IVKTFFKRSGRRGV) lie on the Cytoplasmic side of the membrane.

It belongs to the EMP24/GP25L family.

The protein localises to the endoplasmic reticulum membrane. This is an uncharacterized protein from Schizosaccharomyces pombe (strain 972 / ATCC 24843) (Fission yeast).